Here is a 115-residue protein sequence, read N- to C-terminus: Large ribosomal subunit protein P2 (115 aa).

M1 bears the N-acetylmethionine mark. Phosphoserine is present on S19. The residue at position 21 (K21) is an N6-acetyllysine; alternate. The residue at position 21 (K21) is an N6-succinyllysine; alternate. Positions 76 to 90 (APGSAAPAAGSAPAA) are enriched in low complexity. Residues 76 to 115 (APGSAAPAAGSAPAAAEEKKDEKKEESEESDDDMGFGLFD) form a disordered region. Phosphoserine occurs at positions 79 and 86. The span at 91 to 101 (AEEKKDEKKEE) shows a compositional bias: basic and acidic residues. Phosphoserine is present on residues S102 and S105.

The protein belongs to the eukaryotic ribosomal protein P1/P2 family. Heterodimer with RPLP1 at the lateral ribosomal stalk of the large ribosomal subunit.

Its function is as follows. Plays an important role in the elongation step of protein synthesis. This is Large ribosomal subunit protein P2 (Rplp2) from Rattus norvegicus (Rat).